A 751-amino-acid polypeptide reads, in one-letter code: Photosystem I P700 chlorophyll a apoprotein A1 (751 aa).

Transmembrane regions (helical) follow at residues 72-95 (IFSAHFGHLAVVFVWLSGMYFHGA), 158-181 (LYCTAIGGLVMAALMLFAGWFHYH), 197-221 (MNHHLAGLLGLGSLGWAGHQIHVSM), 293-311 (TAHHHLAIAVLFIIAGHMY), 348-371 (WHAQLAINLALLGSLTIIVAQHMY), 387-413 (LSLFTHHMWIGGFLIVGAGAHGAIFMV), 435-457 (AIISHLNWVCIFLGFHSFGLYIH), and 532-550 (FMVHHIHAFTIHVTALILL). Residues cysteine 574 and cysteine 583 each contribute to the [4Fe-4S] cluster site. A run of 2 helical transmembrane segments spans residues 590–611 (HVFLGLFWMYNSLSIVIFHFSW) and 665–687 (LSAYGIMFLAGHFVFAFSLMFLF). Histidine 676 contributes to the chlorophyll a' binding site. Methionine 684 and tyrosine 692 together coordinate chlorophyll a. Tryptophan 693 contributes to the phylloquinone binding site. Residues 725–745 (AVGVAHYLLGGIVTTWAFFLA) traverse the membrane as a helical segment.

The protein belongs to the PsaA/PsaB family. The PsaA/B heterodimer binds the P700 chlorophyll special pair and subsequent electron acceptors. PSI consists of a core antenna complex that captures photons, and an electron transfer chain that converts photonic excitation into a charge separation. The cyanobacterial PSI reaction center is composed of one copy each of PsaA,B,C,D,E,F,I,J,K,L,M and X, and forms trimeric complexes. It depends on PSI electron transfer chain: 5 chlorophyll a, 1 chlorophyll a', 2 phylloquinones and 3 4Fe-4S clusters. PSI core antenna: 90 chlorophyll a, 22 carotenoids, 3 phospholipids and 1 galactolipid. P700 is a chlorophyll a/chlorophyll a' dimer, A0 is one or more chlorophyll a, A1 is one or both phylloquinones and FX is a shared 4Fe-4S iron-sulfur center. as a cofactor.

Its subcellular location is the cellular thylakoid membrane. It carries out the reaction reduced [plastocyanin] + hnu + oxidized [2Fe-2S]-[ferredoxin] = oxidized [plastocyanin] + reduced [2Fe-2S]-[ferredoxin]. In terms of biological role, psaA and PsaB bind P700, the primary electron donor of photosystem I (PSI), as well as the electron acceptors A0, A1 and FX. PSI is a plastocyanin/cytochrome c6-ferredoxin oxidoreductase, converting photonic excitation into a charge separation, which transfers an electron from the donor P700 chlorophyll pair to the spectroscopically characterized acceptors A0, A1, FX, FA and FB in turn. Oxidized P700 is reduced on the lumenal side of the thylakoid membrane by plastocyanin or cytochrome c6. This Synechocystis sp. (strain ATCC 27184 / PCC 6803 / Kazusa) protein is Photosystem I P700 chlorophyll a apoprotein A1.